Here is a 78-residue protein sequence, read N- to C-terminus: Kassorin-S (78 aa).

A signal peptide spans 1–22 (MLTLKKSMLLLFFLGMVSLSLA). Residues 23-64 (NSKRADEEGEDKRADEEGEDKRADEEGEDKRADEEGEEKRKR) constitute a propeptide that is removed on maturation. The disordered stretch occupies residues 24 to 60 (SKRADEEGEDKRADEEGEDKRADEEGEDKRADEEGEE). The span at 25–60 (KRADEEGEDKRADEEGEDKRADEEGEDKRADEEGEE) shows a compositional bias: basic and acidic residues. Leu77 is subject to Leucine amide.

It belongs to the frog skin active peptide (FSAP) family. Brevinin subfamily. Expressed by the skin glands.

Its subcellular location is the secreted. Antimicrobial peptide. Active against the Gram-positive bacterium S.aureus (MIC=30 uM) and the yeast C.albicans (MIC=100 uM). Not effective against the Gram-negative bacterium E.coli at concentrations up to 250 uM. Lacks ability to induce contraction of smooth muscle in isolated guinea pig urinary bladder. Elicits histamine release from rat peritoneal mast cells. This is Kassorin-S from Kassina senegalensis (Senegal running frog).